Consider the following 345-residue polypeptide: Type II restriction enzyme HgiCI (345 aa).

The enzyme catalyses Endonucleolytic cleavage of DNA to give specific double-stranded fragments with terminal 5'-phosphates.. In terms of biological role, a P subtype restriction enzyme that recognizes the double-stranded sequence 5'-GGYRCC-3' and cleaves after G-1. The chain is Type II restriction enzyme HgiCI (hgiCIR) from Herpetosiphon aurantiacus (Herpetosiphon giganteus).